The sequence spans 1026 residues: Beta-galactosidase (1026 aa).

Substrate contacts are provided by asparagine 104 and aspartate 203. Aspartate 203 contacts Na(+). Mg(2+) is bound by residues glutamate 418, histidine 420, and glutamate 463. Residues glutamate 463 and 539–542 contribute to the substrate site; that span reads EYAH. Residue glutamate 463 is the Proton donor of the active site. The active-site Nucleophile is the glutamate 539. Residue asparagine 599 coordinates Mg(2+). The Na(+) site is built by phenylalanine 603 and asparagine 606. The substrate site is built by asparagine 606 and tryptophan 1002.

This sequence belongs to the glycosyl hydrolase 2 family. As to quaternary structure, homotetramer. Mg(2+) serves as cofactor. It depends on Na(+) as a cofactor.

The enzyme catalyses Hydrolysis of terminal non-reducing beta-D-galactose residues in beta-D-galactosides.. The polypeptide is Beta-galactosidase (Erwinia tasmaniensis (strain DSM 17950 / CFBP 7177 / CIP 109463 / NCPPB 4357 / Et1/99)).